A 523-amino-acid polypeptide reads, in one-letter code: ATP synthase subunit alpha (523 aa).

173-180 (GDRQTGKT) is an ATP binding site.

Belongs to the ATPase alpha/beta chains family. F-type ATPases have 2 components, CF(1) - the catalytic core - and CF(0) - the membrane proton channel. CF(1) has five subunits: alpha(3), beta(3), gamma(1), delta(1), epsilon(1). CF(0) has three main subunits: a(1), b(2) and c(9-12). The alpha and beta chains form an alternating ring which encloses part of the gamma chain. CF(1) is attached to CF(0) by a central stalk formed by the gamma and epsilon chains, while a peripheral stalk is formed by the delta and b chains.

Its subcellular location is the cell membrane. It catalyses the reaction ATP + H2O + 4 H(+)(in) = ADP + phosphate + 5 H(+)(out). Produces ATP from ADP in the presence of a proton gradient across the membrane. The alpha chain is a regulatory subunit. The protein is ATP synthase subunit alpha of Streptomyces griseus subsp. griseus (strain JCM 4626 / CBS 651.72 / NBRC 13350 / KCC S-0626 / ISP 5235).